A 217-amino-acid polypeptide reads, in one-letter code: Guanylate kinase (217 aa).

The region spanning 15 to 194 is the Guanylate kinase-like domain; sequence GLMLVLSSPS…AYQRLKRILL (180 aa). Position 22–29 (22–29) interacts with ATP; it reads SPSGAGKT.

The protein belongs to the guanylate kinase family.

It localises to the cytoplasm. It catalyses the reaction GMP + ATP = GDP + ADP. Essential for recycling GMP and indirectly, cGMP. The polypeptide is Guanylate kinase (Hyphomonas neptunium (strain ATCC 15444)).